Reading from the N-terminus, the 217-residue chain is 3,4-dihydroxy-2-butanone 4-phosphate synthase (217 aa).

D-ribulose 5-phosphate is bound by residues 37-38 (RE), aspartate 42, 150-154 (RGGHT), and glutamate 174. Glutamate 38 serves as a coordination point for Mg(2+). Mg(2+) is bound at residue histidine 153.

The protein belongs to the DHBP synthase family. As to quaternary structure, homodimer. Mg(2+) serves as cofactor. It depends on Mn(2+) as a cofactor.

The enzyme catalyses D-ribulose 5-phosphate = (2S)-2-hydroxy-3-oxobutyl phosphate + formate + H(+). It functions in the pathway cofactor biosynthesis; riboflavin biosynthesis; 2-hydroxy-3-oxobutyl phosphate from D-ribulose 5-phosphate: step 1/1. Functionally, catalyzes the conversion of D-ribulose 5-phosphate to formate and 3,4-dihydroxy-2-butanone 4-phosphate. This chain is 3,4-dihydroxy-2-butanone 4-phosphate synthase, found in Shigella boydii serotype 18 (strain CDC 3083-94 / BS512).